The sequence spans 442 residues: QWRF motif-containing protein 6 (442 aa).

Disordered stretches follow at residues 1-144 (MEAK…LSQQ) and 221-240 (FSRL…ADTK). Residues 57 to 66 (KQHHLQHHQI) are compositionally biased toward basic residues. Residues 80-89 (KMADGDENRS) are compositionally biased toward basic and acidic residues. Residues 264 to 267 (QWRF) carry the QWRF motif motif.

Belongs to the QWRF family.

This Arabidopsis thaliana (Mouse-ear cress) protein is QWRF motif-containing protein 6 (QWRF6).